The sequence spans 302 residues: Tyrosine--tRNA ligase 2 (302 aa).

L-tyrosine is bound at residue Tyr33. The 'HIGH' region motif lies at Pro38–His47. Residues Tyr160 and Gln164 each coordinate L-tyrosine. Residues Lys220–Ser224 carry the 'KMSKS' region motif. An ATP-binding site is contributed by Lys223.

This sequence belongs to the class-I aminoacyl-tRNA synthetase family. TyrS type 1 subfamily. Homodimer.

It is found in the cytoplasm. The catalysed reaction is tRNA(Tyr) + L-tyrosine + ATP = L-tyrosyl-tRNA(Tyr) + AMP + diphosphate + H(+). Its function is as follows. Catalyzes the attachment of tyrosine to tRNA(Tyr) in a two-step reaction: tyrosine is first activated by ATP to form Tyr-AMP and then transferred to the acceptor end of tRNA(Tyr). This chain is Tyrosine--tRNA ligase 2 (tyrS2), found in Streptococcus thermophilus (strain CNRZ 1066).